We begin with the raw amino-acid sequence, 638 residues long: Probable potassium transport system protein Kup (638 aa).

The next 12 membrane-spanning stretches (helical) occupy residues 25–45, 65–85, 114–134, 152–172, 184–204, 226–246, 262–282, 291–311, 352–372, 382–402, 410–430, and 434–454; these read LAIA…LYSL, VISL…LLFV, AGAL…DAVI, PHLS…LFWI, FGPI…YHIV, LLQA…AEAL, AYGL…ALLI, PFFL…STVA, IYVP…VVGF, YGIA…VVMV, LLVG…FGAN, and VAQG…LLMT.

This sequence belongs to the HAK/KUP transporter (TC 2.A.72) family.

Its subcellular location is the cell inner membrane. It catalyses the reaction K(+)(in) + H(+)(in) = K(+)(out) + H(+)(out). Functionally, transport of potassium into the cell. Likely operates as a K(+):H(+) symporter. This is Probable potassium transport system protein Kup from Burkholderia cenocepacia (strain HI2424).